Here is a 353-residue protein sequence, read N- to C-terminus: Outer membrane protein P2 (353 aa).

The N-terminal stretch at 1 to 20 (MKKTLAALIVGAFAASAANA) is a signal peptide.

This sequence belongs to the Gram-negative porin family. In terms of assembly, homotrimer.

It is found in the cell outer membrane. Functionally, forms pores that allow passive diffusion of small molecules across the outer membrane. The protein is Outer membrane protein P2 (ompP2) of Haemophilus influenzae.